An 84-amino-acid chain; its full sequence is Small nuclear ribonucleoprotein E (84 aa).

Residues isoleucine 13 to isoleucine 84 enclose the Sm domain.

The protein belongs to the snRNP Sm proteins family. As to quaternary structure, component of the Sm core complex, present in spliceosomal snRNP U1, U2, U4/U6 and U5. The core complex contains smb1, smd1, smd2, smd3, sme1, smf1 and smg1 (Sm proteins B, D1, D2, D3, E, F and G, respectively), and is probably a heptameric ring structure.

The protein localises to the cytoplasm. It is found in the nucleus. In terms of biological role, involved in pre-mRNA splicing. Binds and is required for the stability of snRNA U1, U2, U4 and U5 which contain a highly conserved structural motif called the Sm binding site. Involved in cap modification. This is Small nuclear ribonucleoprotein E from Schizosaccharomyces pombe (strain 972 / ATCC 24843) (Fission yeast).